We begin with the raw amino-acid sequence, 524 residues long: Cytochrome P450 monooxygenase lnaC (524 aa).

A helical transmembrane segment spans residues 16-36 (ALAVSCIAVSLFLLSPWIAYA). The N-linked (GlcNAc...) asparagine glycan is linked to N150. C471 is a heme binding site.

It belongs to the cytochrome P450 family. Requires heme as cofactor.

It is found in the membrane. It participates in secondary metabolite biosynthesis. Functionally, cytochrome P450 monooxygenase; part of the lna gene cluster that mediates the biosynthesis of diastereomeric piperazines. Lna and lnb clusters encode sets of enzymes that produce overlapping sets of previously undescribed metabolites such as piperazinomycin-like metabolites or morpholine. The lna and lnb biosynthetic pathways appear to be part of a signaling network that controls the formation of sclerotia, a resilient overwintering structure. One primary function of the non-canonical nonribosomal peptide synthetases lnaA and lnbA consists in the reduction of L-tyrosine. The presence in the clusters of tailoring enzymes such as the oxidoreductases lnaB, lnbB, lnaE or lnbE, as well as of the cytochrome P450 monooxygenases lnaC, lnaD, or lnbC, might explain formation of various diastereomeric piperazines. This is Cytochrome P450 monooxygenase lnaC from Aspergillus flavus (strain ATCC 200026 / FGSC A1120 / IAM 13836 / NRRL 3357 / JCM 12722 / SRRC 167).